A 302-amino-acid polypeptide reads, in one-letter code: Lipoyl synthase (302 aa).

Positions 44, 49, 55, 70, 74, 77, and 283 each coordinate [4Fe-4S] cluster. In terms of domain architecture, Radical SAM core spans 56–272 (WSKKHATVMI…AKVARSKGFL (217 aa)).

Belongs to the radical SAM superfamily. Lipoyl synthase family. Requires [4Fe-4S] cluster as cofactor.

It localises to the cytoplasm. It carries out the reaction [[Fe-S] cluster scaffold protein carrying a second [4Fe-4S](2+) cluster] + N(6)-octanoyl-L-lysyl-[protein] + 2 oxidized [2Fe-2S]-[ferredoxin] + 2 S-adenosyl-L-methionine + 4 H(+) = [[Fe-S] cluster scaffold protein] + N(6)-[(R)-dihydrolipoyl]-L-lysyl-[protein] + 4 Fe(3+) + 2 hydrogen sulfide + 2 5'-deoxyadenosine + 2 L-methionine + 2 reduced [2Fe-2S]-[ferredoxin]. Its pathway is protein modification; protein lipoylation via endogenous pathway; protein N(6)-(lipoyl)lysine from octanoyl-[acyl-carrier-protein]: step 2/2. Catalyzes the radical-mediated insertion of two sulfur atoms into the C-6 and C-8 positions of the octanoyl moiety bound to the lipoyl domains of lipoate-dependent enzymes, thereby converting the octanoylated domains into lipoylated derivatives. The chain is Lipoyl synthase from Orientia tsutsugamushi (strain Boryong) (Rickettsia tsutsugamushi).